Here is a 731-residue protein sequence, read N- to C-terminus: Catalase-peroxidase 2 (731 aa).

The span at Met-1–Ser-10 shows a compositional bias: polar residues. Positions Met-1–Trp-26 are disordered. The segment at residues Trp-95–Tyr-218 is a cross-link (tryptophyl-tyrosyl-methioninium (Trp-Tyr) (with M-244)). His-96 serves as the catalytic Proton acceptor. Residues Tyr-218–Met-244 constitute a cross-link (tryptophyl-tyrosyl-methioninium (Tyr-Met) (with W-95)). A heme b-binding site is contributed by His-259.

As to quaternary structure, homodimer. Requires heme b as cofactor. Post-translationally, formation of the three residue Trp-Tyr-Met cross-link is important for the catalase, but not the peroxidase activity of the enzyme.

The catalysed reaction is H2O2 + AH2 = A + 2 H2O. The enzyme catalyses 2 H2O2 = O2 + 2 H2O. Bifunctional enzyme with both catalase and broad-spectrum peroxidase activity. The chain is Catalase-peroxidase 2 from Haloarcula marismortui (strain ATCC 43049 / DSM 3752 / JCM 8966 / VKM B-1809) (Halobacterium marismortui).